A 344-amino-acid chain; its full sequence is Phenylalanine--tRNA ligase alpha subunit (344 aa).

E269 contacts Mg(2+).

This sequence belongs to the class-II aminoacyl-tRNA synthetase family. Phe-tRNA synthetase alpha subunit type 1 subfamily. Tetramer of two alpha and two beta subunits. Requires Mg(2+) as cofactor.

Its subcellular location is the cytoplasm. It catalyses the reaction tRNA(Phe) + L-phenylalanine + ATP = L-phenylalanyl-tRNA(Phe) + AMP + diphosphate + H(+). This chain is Phenylalanine--tRNA ligase alpha subunit, found in Ralstonia nicotianae (strain ATCC BAA-1114 / GMI1000) (Ralstonia solanacearum).